The sequence spans 290 residues: Arylamine N-acetyltransferase 1 (290 aa).

Met1 bears the N-acetylmethionine mark. Ser103 is a binding site for CoA. 106–107 is a binding site for substrate; the sequence is IH. Tyr208 provides a ligand contact to CoA.

It belongs to the arylamine N-acetyltransferase family.

The protein localises to the cytoplasm. The catalysed reaction is an arylamine + acetyl-CoA = an N-acetylarylamine + CoA. Participates in the detoxification of a plethora of hydrazine and arylamine drugs. The protein is Arylamine N-acetyltransferase 1 (NAT1) of Bos taurus (Bovine).